Consider the following 677-residue polypeptide: Pannexin-2 (677 aa).

Residues 11–53 (MATALLAGEKLRELILPGSQDDKAGALAALLLQLKLELPFDRV) lie on the Cytoplasmic side of the membrane. Residues 54 to 74 (VTIGTVLVPILLVTLVFTKNF) traverse the membrane as a helical segment. Residues 75–125 (AEEPIYCYTPHNFTRDQALYARGYCWTELRDALPGVDASLWPSLFEHKFLP) lie on the Extracellular side of the membrane. N-linked (GlcNAc...) asparagine glycosylation is present at Asn-86. A helical membrane pass occupies residues 126–146 (YALLAFAAIMYVPALGWEFLA). Residues 147–230 (STRLTSELNF…NFLAKLYLAR (84 aa)) lie on the Cytoplasmic side of the membrane. Residues 231–251 (HVLILLLSVVPISYLCTYYAT) traverse the membrane as a helical segment. Residues 252–295 (QKQNEFTCALGASPDGPVGSAGPTVRVSCKLPSVQLQRIIAGVD) lie on the Extracellular side of the membrane. The chain crosses the membrane as a helical span at residues 296 to 316 (IVLLCFMNLIILVNLIHLFIF). The Cytoplasmic segment spans residues 317–617 (RKSNFIFDKL…LGKADPLTIL (301 aa)). Residues 394–408 (TTPTVRDSGIQTVDP) show a composition bias toward polar residues. 2 disordered regions span residues 394–425 (TTPTVRDSGIQTVDPSINPAEPDGSAEPPVVK) and 485–512 (AHHYKGSGGDSGPSSAPPAASEKKHTRH). Phosphoserine is present on residues Ser-593 and Ser-604.

This sequence belongs to the pannexin family. As to quaternary structure, homoheptameric. S-palmitoylated in neural stem and progenitor cells. Post-translationally, cleaved by CASP3 and CASP7 during apoptosis. Cleavage has no effect on it function. In terms of tissue distribution, expression is enriched in central nervous system. Expressed in suprabasal layers of skin epidermis. As to expression, more aboundantly expressed in skin.

The protein localises to the cell membrane. Its subcellular location is the golgi apparatus membrane. It is found in the endoplasmic reticulum membrane. It catalyses the reaction ATP(in) = ATP(out). The enzyme catalyses chloride(in) = chloride(out). It carries out the reaction iodide(out) = iodide(in). The catalysed reaction is Na(+)(in) = Na(+)(out). It catalyses the reaction D-gluconate(in) = D-gluconate(out). Functionally, ion channel with a slight anion preference. Also able to release ATP. Plays a role in regulating neurogenesis and apoptosis in keratinocytes. The polypeptide is Pannexin-2 (Panx2) (Mus musculus (Mouse)).